The chain runs to 124 residues: Ribonuclease pancreatic (124 aa).

Positions 1-13 are enriched in basic and acidic residues; that stretch reads KESAAAKFERQHM. Residues 1 to 24 form a disordered region; the sequence is KESAAAKFERQHMDPSMSSASSSN. Positions 7 and 10 each coordinate substrate. The active-site Proton acceptor is the histidine 12. 4 disulfide bridges follow: cysteine 26-cysteine 84, cysteine 40-cysteine 95, cysteine 58-cysteine 110, and cysteine 65-cysteine 72. Substrate-binding positions include 41–45, lysine 66, and arginine 85; that span reads KPVNT. Catalysis depends on histidine 119, which acts as the Proton donor.

This sequence belongs to the pancreatic ribonuclease family. In terms of assembly, monomer. Interacts with and forms tight 1:1 complexes with RNH1. Dimerization of two such complexes may occur. Interaction with RNH1 inhibits this protein. In terms of tissue distribution, pancreas.

It localises to the secreted. The enzyme catalyses an [RNA] containing cytidine + H2O = an [RNA]-3'-cytidine-3'-phosphate + a 5'-hydroxy-ribonucleotide-3'-[RNA].. The catalysed reaction is an [RNA] containing uridine + H2O = an [RNA]-3'-uridine-3'-phosphate + a 5'-hydroxy-ribonucleotide-3'-[RNA].. Functionally, endonuclease that catalyzes the cleavage of RNA on the 3' side of pyrimidine nucleotides. Acts on single-stranded and double-stranded RNA. This Dama dama (Fallow deer) protein is Ribonuclease pancreatic (RNASE1).